Reading from the N-terminus, the 430-residue chain is Probable protein phosphatase 1N (430 aa).

The segment at 16-65 (CKKKEREKEGREEEEEEEAGRRAPEGPRSLLTAPRRAQRPHGGAEASGGL) is disordered. A compositionally biased stretch (basic and acidic residues) spans 17–26 (KKKEREKEGR). The PPM-type phosphatase domain occupies 66–326 (RFGASAAQGW…DNMTCILVCF (261 aa)). Residues aspartate 103, glycine 104, aspartate 274, and aspartate 317 each coordinate Mn(2+). Residues 407 to 430 (GEKGQDGAGKSNPTHLGSALDMEA) form a disordered region.

Belongs to the PP2C family. Mg(2+) serves as cofactor. Requires Mn(2+) as cofactor.

It carries out the reaction O-phospho-L-seryl-[protein] + H2O = L-seryl-[protein] + phosphate. The enzyme catalyses O-phospho-L-threonyl-[protein] + H2O = L-threonyl-[protein] + phosphate. This is Probable protein phosphatase 1N (PPM1N) from Homo sapiens (Human).